Here is a 277-residue protein sequence, read N- to C-terminus: C2H2-type zinc-finger transcription factor (277 aa).

Disordered regions lie at residues 23–66 (PTMN…AHPP) and 78–146 (MNEP…TDSI). Over residues 27–37 (EIETTDNTYPR) the composition is skewed to polar residues. Residues 185-208 (HPCPDCGRVFTRSTARNFHRQSGT) form a C2H2-type; degenerate zinc finger.

It belongs to the GLI C2H2-type zinc-finger protein family.

It localises to the nucleus. C2H2-type zinc-finger transcription factor that controls the expression of the nonribosomal peptide synthases inpA and inpB, as well as of the other inp cluster-associated genes. Also mediates the expression of the asperfuranone biosynthesis gene cluster by binding to the afoA promoter. Probably recognizes the 5'-CT/C/AAAAGGAT/AT/GG/CA-3' motif in the promoters of teget genes. This chain is C2H2-type zinc-finger transcription factor, found in Emericella nidulans (strain FGSC A4 / ATCC 38163 / CBS 112.46 / NRRL 194 / M139) (Aspergillus nidulans).